The chain runs to 485 residues: MSFWNSLSITTRYSRLPRCFFTYVQPTPLDNSRWLIWNSELAKQFDLPENVHNHSELLDAFSGEVVPSVFAPLAMKYAGHQFGSYNPDLGDGRGLLLAEIKDKKGNSFDLHLKGAGLTPYSRSGDGRAVLRSTIREYLCSEAMAGLGIPTTRALGMMTSDTPVFREGYETGALLIRMAETHIRFGHFEHLFYSNLLEELKLLSDKVIEWHFPCCLGEDKPYLAMFNNIVDRTAYMIAQWQAVGFAHGVMNTDNMSIIGQTFDYGPFGFLDDYEPGYICNHSDYQGRYAFNQQPRIGLWNLSALAHSLSPLIDKSDLEKALEQYEIKLHDYFSQLMRKKLGLLSKQEGDTRLFESMFELLSQNTVDYTRFMRVLSDLDSQDKQTVIDLFVDREAATLWVDLYLTRCKLEADSFDMRCSKMRKVNPKYVLRNYLAQQAIVKANEGDFSDVKILSTLLASPFDEHPDFERYAELPPEWGKRMEISCSS.

ATP is bound by residues Gly-90, Gly-92, Arg-93, Lys-113, Asp-125, Gly-126, Arg-176, and Arg-183. Asp-252 functions as the Proton acceptor in the catalytic mechanism. Residues Asn-253 and Asp-262 each contribute to the Mg(2+) site. Asp-262 lines the ATP pocket.

The protein belongs to the SELO family. Requires Mg(2+) as cofactor. Mn(2+) serves as cofactor.

The catalysed reaction is L-seryl-[protein] + ATP = 3-O-(5'-adenylyl)-L-seryl-[protein] + diphosphate. The enzyme catalyses L-threonyl-[protein] + ATP = 3-O-(5'-adenylyl)-L-threonyl-[protein] + diphosphate. It carries out the reaction L-tyrosyl-[protein] + ATP = O-(5'-adenylyl)-L-tyrosyl-[protein] + diphosphate. It catalyses the reaction L-histidyl-[protein] + UTP = N(tele)-(5'-uridylyl)-L-histidyl-[protein] + diphosphate. The catalysed reaction is L-seryl-[protein] + UTP = O-(5'-uridylyl)-L-seryl-[protein] + diphosphate. The enzyme catalyses L-tyrosyl-[protein] + UTP = O-(5'-uridylyl)-L-tyrosyl-[protein] + diphosphate. Its function is as follows. Nucleotidyltransferase involved in the post-translational modification of proteins. It can catalyze the addition of adenosine monophosphate (AMP) or uridine monophosphate (UMP) to a protein, resulting in modifications known as AMPylation and UMPylation. This Aliivibrio fischeri (strain MJ11) (Vibrio fischeri) protein is Protein nucleotidyltransferase YdiU.